A 626-amino-acid polypeptide reads, in one-letter code: Receptor-like protein 4 (626 aa).

The signal sequence occupies residues 1–22 (MMLRFILASLLLSSFSLYSSLA). Residues 23-549 (RPAPYALRIS…CGPHLSSGAK (527 aa)) are Extracellular-facing. Asn-61, Asn-282, Asn-333, and Asn-417 each carry an N-linked (GlcNAc...) asparagine glycan. LRR repeat units follow at residues 420 to 444 (RWFI…ISKL), 445 to 468 (KHLQ…LGSV), 470 to 492 (SLEV…LGEL), and 493 to 516 (TSLR…VGGR). N-linked (GlcNAc...) asparagine glycosylation is found at Asn-451 and Asn-482. Asn-524 is a glycosylation site (N-linked (GlcNAc...) asparagine). The chain crosses the membrane as a helical span at residues 550–570 (IGIAFGVSLAFLLIVACAMIW). At 571-626 (WKRRQNILRAQQIAARGAPYAKKRTHVSHDIQMSRHGHNNHGQARTAVENGPSLLS) the chain is on the cytoplasmic side. The tract at residues 603–626 (MSRHGHNNHGQARTAVENGPSLLS) is disordered.

This sequence belongs to the RLP family.

Its subcellular location is the cell membrane. This is Receptor-like protein 4 from Arabidopsis thaliana (Mouse-ear cress).